Reading from the N-terminus, the 121-residue chain is Large ribosomal subunit protein uL18 (121 aa).

Belongs to the universal ribosomal protein uL18 family. Part of the 50S ribosomal subunit; part of the 5S rRNA/L5/L18/L25 subcomplex. Contacts the 5S and 23S rRNAs.

In terms of biological role, this is one of the proteins that bind and probably mediate the attachment of the 5S RNA into the large ribosomal subunit, where it forms part of the central protuberance. The polypeptide is Large ribosomal subunit protein uL18 (Caldanaerobacter subterraneus subsp. tengcongensis (strain DSM 15242 / JCM 11007 / NBRC 100824 / MB4) (Thermoanaerobacter tengcongensis)).